Consider the following 217-residue polypeptide: Uridylate kinase (217 aa).

6 to 10 (KLSGR) is an ATP binding site. Residue Gly38 participates in UMP binding. ATP-binding residues include Gly39 and Arg43. UMP contacts are provided by residues Asp60 and 107 to 113 (FQPGQST). The ATP site is built by Asn134, Tyr139, and Asp142.

This sequence belongs to the UMP kinase family. In terms of assembly, homohexamer.

The protein localises to the cytoplasm. It catalyses the reaction UMP + ATP = UDP + ADP. The protein operates within pyrimidine metabolism; CTP biosynthesis via de novo pathway; UDP from UMP (UMPK route): step 1/1. Its activity is regulated as follows. Inhibited by UTP. In terms of biological role, catalyzes the reversible phosphorylation of UMP to UDP. The chain is Uridylate kinase from Pyrobaculum islandicum (strain DSM 4184 / JCM 9189 / GEO3).